Consider the following 224-residue polypeptide: Protein FAM3D (224 aa).

A signal peptide spans 1–25 (MRVSGVLRLLALIFAIVTTWMFIRS). Disulfide bonds link Cys-55–Cys-83 and Cys-61–Cys-218. One can recognise a GG-type lectin domain in the interval 64-222 (NYFAFKICSG…LEMEGCMPPK (159 aa)). Residue Asn-107 is glycosylated (N-linked (GlcNAc...) asparagine).

The protein belongs to the FAM3 family. As to expression, abundantly expressed in placenta and weakly expressed in small intestine.

It is found in the secreted. This is Protein FAM3D (FAM3D) from Homo sapiens (Human).